Consider the following 95-residue polypeptide: Protein TusB (95 aa).

The protein belongs to the DsrH/TusB family. In terms of assembly, heterohexamer, formed by a dimer of trimers. The hexameric TusBCD complex contains 2 copies each of TusB, TusC and TusD. The TusBCD complex interacts with TusE.

The protein localises to the cytoplasm. In terms of biological role, part of a sulfur-relay system required for 2-thiolation of 5-methylaminomethyl-2-thiouridine (mnm(5)s(2)U) at tRNA wobble positions. This chain is Protein TusB, found in Yersinia enterocolitica serotype O:8 / biotype 1B (strain NCTC 13174 / 8081).